We begin with the raw amino-acid sequence, 1606 residues long: Thrombospondin type-1 domain-containing protein 7B (1606 aa).

The first 31 residues, Met-1–Ala-31, serve as a signal peptide directing secretion. Residues Ala-32–Lys-1555 lie on the Extracellular side of the membrane. TSP type-1 domains lie at Asn-40–Asp-98, Asp-102–Pro-177, Asp-179–Pro-233, Asp-336–Gly-392, Pro-399–Ser-482, Asp-484–Tyr-543, Asp-601–Met-661, Gln-662–Lys-735, Asp-737–Pro-796, Val-797–Arg-869, Asp-871–Asp-924, Glu-925–Pro-998, Asp-1000–Pro-1125, Glu-1127–Phe-1181, Gln-1182–Val-1245, Asn-1247–Tyr-1302, Ser-1303–Pro-1368, and Asp-1370–Tyr-1431. N-linked (GlcNAc...) asparagine glycosylation is found at Asn-150, Asn-190, and Asn-219. 3 disulfides stabilise this stretch: Cys-411-Cys-477, Cys-431-Cys-481, and Cys-442-Cys-466. Intrachain disulfides connect Cys-602/Cys-643, Cys-613/Cys-617, and Cys-655/Cys-660. The N-linked (GlcNAc...) asparagine glycan is linked to Asn-683. Cystine bridges form between Cys-738/Cys-779, Cys-749/Cys-753, and Cys-789/Cys-795. Residue Asn-757 is glycosylated (N-linked (GlcNAc...) asparagine). N-linked (GlcNAc...) asparagine glycosylation occurs at Asn-842. 3 disulfide bridges follow: Cys-872-Cys-907, Cys-883-Cys-887, and Cys-921-Cys-923. Asn-933 is a glycosylation site (N-linked (GlcNAc...) asparagine). 6 disulfides stabilise this stretch: Cys-937-Cys-993, Cys-959-Cys-997, Cys-970-Cys-983, Cys-1001-Cys-1038, Cys-1012-Cys-1016, and Cys-1120-Cys-1124. An N-linked (GlcNAc...) asparagine glycan is attached at Asn-1186. 3 disulfides stabilise this stretch: Cys-1248–Cys-1286, Cys-1259–Cys-1263, and Cys-1296–Cys-1301. Asn-1308 carries an N-linked (GlcNAc...) asparagine glycan. 3 disulfides stabilise this stretch: Cys-1371–Cys-1415, Cys-1382–Cys-1386, and Cys-1425–Cys-1430. Asn-1456 and Asn-1524 each carry an N-linked (GlcNAc...) asparagine glycan. Residues Ile-1556–Ser-1576 traverse the membrane as a helical segment. At Tyr-1577–Met-1606 the chain is on the cytoplasmic side. Positions Pro-1583–Met-1606 are disordered. Positions His-1586–Pro-1595 are enriched in polar residues.

Its subcellular location is the membrane. The protein is Thrombospondin type-1 domain-containing protein 7B of Homo sapiens (Human).